A 525-amino-acid chain; its full sequence is GMP synthase [glutamine-hydrolyzing] (525 aa).

In terms of domain architecture, Glutamine amidotransferase type-1 spans 9–207 (RILILDFGSQ…VQDICGCEAL (199 aa)). Residue Cys86 is the Nucleophile of the active site. Residues His181 and Glu183 contribute to the active site. Residues 208–400 (WTASNIVEDA…LGLPYDMVYR (193 aa)) form the GMPS ATP-PPase domain. 235 to 241 (SGGVDSS) serves as a coordination point for ATP.

In terms of assembly, homodimer.

The catalysed reaction is XMP + L-glutamine + ATP + H2O = GMP + L-glutamate + AMP + diphosphate + 2 H(+). It functions in the pathway purine metabolism; GMP biosynthesis; GMP from XMP (L-Gln route): step 1/1. Catalyzes the synthesis of GMP from XMP. The protein is GMP synthase [glutamine-hydrolyzing] of Pseudomonas entomophila (strain L48).